The primary structure comprises 369 residues: N-succinylamino acid racemase (369 aa).

Lysine 163 acts as the Proton donor in catalysis. The Mg(2+) site is built by aspartate 188, glutamate 213, and aspartate 238. Lysine 262 serves as the catalytic Proton acceptor.

The protein belongs to the mandelate racemase/muconate lactonizing enzyme family. MenC type 2 subfamily. In terms of assembly, homooctamer. Tetramer of dimers. A divalent metal cation serves as cofactor.

It catalyses the reaction (1R,6R)-6-hydroxy-2-succinyl-cyclohexa-2,4-diene-1-carboxylate = 2-succinylbenzoate + H2O. Functionally, acts as a N-succinylamino acid racemase (NSAR) that catalyzes the racemization of N-succinyl-L-phenylglycine. Also converts 2-succinyl-6-hydroxy-2,4-cyclohexadiene-1-carboxylate (SHCHC) to 2-succinylbenzoate (OSB). Catalyzes both N-succinylamino acid racemization and OSB synthesis at equivalent rates. However, NSAR activity is probably the protein's biological function, because menaquinone biosynthesis genes are missing in this species. This Thermus thermophilus (strain ATCC 27634 / DSM 579 / HB8) protein is N-succinylamino acid racemase.